The sequence spans 1850 residues: Vitellogenin-2 (1850 aa).

The N-terminal stretch at 1–15 is a signal peptide; that stretch reads MRGIILALVLTLVGS. Residues 24–662 enclose the Vitellogenin domain; the sequence is FNSRRSYLYN…SPRTMFPSAI (639 aa). N-linked (GlcNAc...) asparagine glycosylation is present at N604. A disordered region spans residues 935–984; that stretch reads DAPLDVTEEPFQTSERASREHFAMQGPDSMPRKQSHSSREDLRRSTGKRA. A glycan (N-linked (GlcNAc...) asparagine) is linked at N1094. Disordered regions lie at residues 1115–1313 and 1338–1362; these read GTEP…SSSS and EFPK…SHDT. Residues 1122 to 1143 show a composition bias toward low complexity; sequence TSSSSSSASSTATSSSSSSASS. Basic and acidic residues predominate over residues 1156 to 1165; sequence DQVKQARNKD. A compositionally biased stretch (low complexity) spans 1167–1266; it reads SSSSRSSKSS…SRSSSSSSKS (100 aa). N1177 and N1188 each carry an N-linked (GlcNAc...) asparagine glycan. The span at 1267-1277 shows a compositional bias: basic residues; that stretch reads SSHHSHSHHSG. Positions 1278 to 1291 are enriched in low complexity; it reads HLNGSSSSSSSSRS. A glycan (N-linked (GlcNAc...) asparagine) is linked at N1280. Residues 1338–1350 show a composition bias toward basic and acidic residues; sequence EFPKRKLPGDRAT. N1417, N1597, and N1665 each carry an N-linked (GlcNAc...) asparagine glycan. The 178-residue stretch at 1579-1756 folds into the VWFD domain; that stretch reads ARCSVSYNKI…SWILEEAPCR (178 aa). 2 cysteine pairs are disulfide-bonded: C1581–C1719 and C1604–C1755.

Phosvitin, an egg yolk storage protein, is one of the most highly phosphorylated (10%) proteins in nature. In terms of processing, cathepsin D is responsible for intraoocytic processing of vitellogenin. Post-translationally, may contain intrachain disulfide bonds. In terms of tissue distribution, after incorporation from serum via a specific receptor, it is cleaved into four fragments, heavy and light chain lipovitellins, phosphovitin and YGP40, and YGP40 is released into the yolk plasma before or during compartmentation of lipovitellin-phosvitin complex into the yolk granule.

Its function is as follows. Precursor of the major egg-yolk proteins that are sources of nutrients during early development of oviparous organisms. Phosvitin is believed to be of importance in sequestering calcium, iron and other cations for the developing embryo. The sequence is that of Vitellogenin-2 (VTG2) from Gallus gallus (Chicken).